Reading from the N-terminus, the 471-residue chain is Ribulose bisphosphate carboxylase large chain (471 aa).

Substrate is bound by residues Asn-115 and Thr-165. Lys-167 acts as the Proton acceptor in catalysis. Lys-169 is a binding site for substrate. 3 residues coordinate Mg(2+): Lys-193, Asp-195, and Glu-196. At Lys-193 the chain carries N6-carboxylysine. The active-site Proton acceptor is His-286. Substrate contacts are provided by Arg-287, His-319, and Ser-371.

It belongs to the RuBisCO large chain family. Type I subfamily. As to quaternary structure, heterohexadecamer of 8 large chains and 8 small chains. Forms a CsoS2-CsoS1-RuBisCO complex. Mg(2+) is required as a cofactor.

It localises to the carboxysome. It carries out the reaction 2 (2R)-3-phosphoglycerate + 2 H(+) = D-ribulose 1,5-bisphosphate + CO2 + H2O. It catalyses the reaction D-ribulose 1,5-bisphosphate + O2 = 2-phosphoglycolate + (2R)-3-phosphoglycerate + 2 H(+). Its function is as follows. RuBisCO catalyzes two reactions: the carboxylation of D-ribulose 1,5-bisphosphate, the primary event in carbon dioxide fixation, as well as the oxidative fragmentation of the pentose substrate in the photorespiration process. Both reactions occur simultaneously and in competition at the same active site. The chain is Ribulose bisphosphate carboxylase large chain from Parasynechococcus marenigrum (strain WH8102).